The primary structure comprises 249 residues: MRYLNTKNIIAAGVLLSCMSSIAWGAIIPDRTRIIMNESDKGEALKLTNQSKNLPYLAQTWIEDTKGNKSRDFIVTVPPMVRLNPSEQIQIRMITQEKIAQLPKDRETLFYFNVREIPPKTDKKNVMQVTMQHALKLFWRPKAIELEDDGVMTYEKVEIIRRNDGSIRFNNKMPYHVTLGYIGTNGVTMLPQTQSLMVTPFSYANTQFKNVPSTFQVGYINDFGGLSFYEINCPVVNNICNISVANRDQ.

A signal peptide spans 1 to 25 (MRYLNTKNIIAAGVLLSCMSSIAWG).

Belongs to the periplasmic pilus chaperone family.

The protein resides in the periplasm. Could be required for the biogenesis of a putative fimbria. This is an uncharacterized protein from Escherichia coli (strain K12).